A 235-amino-acid chain; its full sequence is Uridylate kinase (235 aa).

12-15 (KISG) contributes to the ATP binding site. Gly-54 is a UMP binding site. ATP-binding residues include Gly-55 and Arg-59. UMP contacts are provided by residues Asp-72 and 133–140 (TGNPFFST). ATP-binding residues include Tyr-166 and Asp-169.

The protein belongs to the UMP kinase family. As to quaternary structure, homohexamer.

It is found in the cytoplasm. The catalysed reaction is UMP + ATP = UDP + ADP. Its pathway is pyrimidine metabolism; CTP biosynthesis via de novo pathway; UDP from UMP (UMPK route): step 1/1. Its activity is regulated as follows. Inhibited by UTP. Catalyzes the reversible phosphorylation of UMP to UDP. The polypeptide is Uridylate kinase (Acetivibrio thermocellus (strain ATCC 27405 / DSM 1237 / JCM 9322 / NBRC 103400 / NCIMB 10682 / NRRL B-4536 / VPI 7372) (Clostridium thermocellum)).